Consider the following 185-residue polypeptide: Capsid protein (185 aa).

Positions 135–185 (PNAPILSTLPETTVVRRRDRGRSPRRRTPSPRRRRSQSPRRRRSQSRESQC) are disordered. Residues 149–178 (VRRRDRGRSPRRRTPSPRRRRSQSPRRRRS) show a composition bias toward basic residues. Phosphoserine; by host occurs at positions 157, 164, and 172. A 1; half-length repeat occupies 157–163 (SPRRRTP). Residues 157–179 (SPRRRTPSPRRRRSQSPRRRRSQ) form a 3 X 8 AA repeats of S-P-R-R-R-[PR]-S-Q region. The Bipartite nuclear localization signal signature appears at 160–177 (RRTPSPRRRRSQSPRRRR). A run of 2 repeats spans residues 164 to 171 (SPRRRRSQ) and 172 to 179 (SPRRRRSQ). Residues 179-185 (QSRESQC) form an RNA binding region.

The protein belongs to the orthohepadnavirus core antigen family. Homodimerizes, then multimerizes. Interacts with cytosol exposed regions of viral L glycoprotein present in the reticulum-to-Golgi compartment. Interacts with human FLNB. Phosphorylated form interacts with host importin alpha; this interaction depends on the exposure of the NLS, which itself depends upon genome maturation and/or phosphorylation of the capsid protein. Interacts with host NUP153. In terms of processing, phosphorylated by host SRPK1, SRPK2, and maybe protein kinase C or GAPDH. Phosphorylation is critical for pregenomic RNA packaging. Protein kinase C phosphorylation is stimulated by HBx protein and may play a role in transport of the viral genome to the nucleus at the late step during the viral replication cycle.

The protein resides in the virion. It localises to the host cytoplasm. In terms of biological role, self assembles to form an icosahedral capsid. Most capsids appear to be large particles with an icosahedral symmetry of T=4 and consist of 240 copies of capsid protein, though a fraction forms smaller T=3 particles consisting of 180 capsid proteins. Entering capsids are transported along microtubules to the nucleus. Phosphorylation of the capsid is thought to induce exposure of nuclear localization signal in the C-terminal portion of the capsid protein that allows binding to the nuclear pore complex via the importin (karyopherin-) alpha and beta. Capsids are imported in intact form through the nuclear pore into the nuclear basket, where it probably binds NUP153. Only capsids that contain the mature viral genome can release the viral DNA and capsid protein into the nucleoplasm. Immature capsids get stuck in the basket. Capsids encapsulate the pre-genomic RNA and the P protein. Pre-genomic RNA is reverse-transcribed into DNA while the capsid is still in the cytoplasm. The capsid can then either be directed to the nucleus, providing more genomes for transcription, or bud through the endoplasmic reticulum to provide new virions. The protein is Capsid protein of Hepatitis B virus genotype A3 (isolate Cameroon/CMR711/1994) (HBV-A).